A 303-amino-acid chain; its full sequence is Putative S-adenosyl-L-methionine-dependent methyltransferase SCO6443 (303 aa).

Residues D130 and D159–L160 contribute to the S-adenosyl-L-methionine site.

Belongs to the UPF0677 family.

Functionally, exhibits S-adenosyl-L-methionine-dependent methyltransferase activity. This Streptomyces coelicolor (strain ATCC BAA-471 / A3(2) / M145) protein is Putative S-adenosyl-L-methionine-dependent methyltransferase SCO6443.